Here is an 883-residue protein sequence, read N- to C-terminus: Alanine--tRNA ligase (883 aa).

H563, H567, C677, and H681 together coordinate Zn(2+).

This sequence belongs to the class-II aminoacyl-tRNA synthetase family. The cofactor is Zn(2+).

Its subcellular location is the cytoplasm. It carries out the reaction tRNA(Ala) + L-alanine + ATP = L-alanyl-tRNA(Ala) + AMP + diphosphate. Catalyzes the attachment of alanine to tRNA(Ala) in a two-step reaction: alanine is first activated by ATP to form Ala-AMP and then transferred to the acceptor end of tRNA(Ala). Also edits incorrectly charged Ser-tRNA(Ala) and Gly-tRNA(Ala) via its editing domain. This is Alanine--tRNA ligase from Cereibacter sphaeroides (strain ATCC 17023 / DSM 158 / JCM 6121 / CCUG 31486 / LMG 2827 / NBRC 12203 / NCIMB 8253 / ATH 2.4.1.) (Rhodobacter sphaeroides).